A 127-amino-acid polypeptide reads, in one-letter code: Fatty acid-binding protein, liver (127 aa).

Methionine 1 carries the post-translational modification N-acetylmethionine. An N6-succinyllysine mark is found at lysine 31 and lysine 36. Serine 39 is subject to Phosphoserine. Lysine 46 is subject to N6-succinyllysine. Serine 56 is subject to Phosphoserine. An N6-succinyllysine mark is found at lysine 57, lysine 78, and lysine 90. Phosphoserine is present on serine 100. The residue at position 105 (asparagine 105) is a Deamidated asparagine; alternate. Positions 105–106 (NG) form a cross-link, isoaspartyl glycine isopeptide (Asn-Gly); alternate. An N6-succinyllysine modification is found at lysine 121.

It belongs to the calycin superfamily. Fatty-acid binding protein (FABP) family. In terms of assembly, monomer. Deamidation and transpeptidation at the beta carboxyl of Asn-105 forms an isoaspartyl residue and Edman degradation appears as though blocked. This rearrangement gives rise to an extra negative charge carried by the acid form.

The protein resides in the cytoplasm. Its function is as follows. Plays a role in lipoprotein-mediated cholesterol uptake in hepatocytes. Binds cholesterol. Binds free fatty acids and their coenzyme A derivatives, bilirubin, and some other small molecules in the cytoplasm. May be involved in intracellular lipid transport. This is Fatty acid-binding protein, liver (FABP1) from Bos taurus (Bovine).